We begin with the raw amino-acid sequence, 217 residues long: MEHSSWHALIKAQLPEGYFGKINQFMEQVYSQGIIYPPKEKVFQALLTTLLEEVKVVILGQDPYHGPGQAQGLSFSVPDSIPAPPSLQNILKELSDDIGVKKSHDLTAWAEQGVLLLNACLTVPAGQANGHAGQIWEPFTDAVIQVVNHLDRPVVFVLWGAYARKKKALVTNPHHLIIESAHPSPLSVYRGFWGSKPFSKANAFLKETGQEPIDWLR.

D62 (proton acceptor) is an active-site residue.

It belongs to the uracil-DNA glycosylase (UDG) superfamily. UNG family.

It localises to the cytoplasm. It catalyses the reaction Hydrolyzes single-stranded DNA or mismatched double-stranded DNA and polynucleotides, releasing free uracil.. Its function is as follows. Excises uracil residues from the DNA which can arise as a result of misincorporation of dUMP residues by DNA polymerase or due to deamination of cytosine. This is Uracil-DNA glycosylase from Streptococcus pneumoniae (strain JJA).